Reading from the N-terminus, the 165-residue chain is Nucleotide-binding protein Chy400_2003 (165 aa).

It belongs to the YajQ family.

Its function is as follows. Nucleotide-binding protein. In Chloroflexus aurantiacus (strain ATCC 29364 / DSM 637 / Y-400-fl), this protein is Nucleotide-binding protein Chy400_2003.